Consider the following 154-residue polypeptide: Transcriptional repressor NrdR (154 aa).

A zinc finger lies at 3-34; the sequence is CPTCKYNGTRVVDSRPADDGNSIRRRRECEKC. An ATP-cone domain is found at 49-139; that stretch reads LIVVKKDGAR…VYRQFKDISV (91 aa).

Belongs to the NrdR family. Zn(2+) serves as cofactor.

Negatively regulates transcription of bacterial ribonucleotide reductase nrd genes and operons by binding to NrdR-boxes. The sequence is that of Transcriptional repressor NrdR from Listeria welshimeri serovar 6b (strain ATCC 35897 / DSM 20650 / CCUG 15529 / CIP 8149 / NCTC 11857 / SLCC 5334 / V8).